The following is a 1034-amino-acid chain: Beta-galactosidase (1034 aa).

Asparagine 108 and aspartate 207 together coordinate substrate. Residue aspartate 207 participates in Na(+) binding. 3 residues coordinate Mg(2+): glutamate 423, histidine 425, and glutamate 468. Substrate-binding positions include glutamate 468 and 544 to 547 (EYAH). Glutamate 468 acts as the Proton donor in catalysis. Catalysis depends on glutamate 544, which acts as the Nucleophile. Asparagine 604 serves as a coordination point for Mg(2+). Phenylalanine 608 and asparagine 611 together coordinate Na(+). Asparagine 611 and tryptophan 1010 together coordinate substrate.

The protein belongs to the glycosyl hydrolase 2 family. As to quaternary structure, homotetramer. It depends on Mg(2+) as a cofactor. The cofactor is Na(+).

It catalyses the reaction Hydrolysis of terminal non-reducing beta-D-galactose residues in beta-D-galactosides.. The polypeptide is Beta-galactosidase (Klebsiella pneumoniae).